The chain runs to 23 residues: Conotoxin as25a (23 aa).

P4 carries the post-translational modification 4-hydroxyproline; partial. A 4-hydroxyproline; partial; alternate modification is found at P23. Position 23 is a proline amide; alternate (P23).

In terms of processing, the name as25b given in PubMed:23474143 corresponds to the hydroxylated peptide. The amidation of the C-terminus of this hydroxylated peptide is not directly confirmed. Contains 3 disulfide bonds. Expressed by the venom duct.

Its subcellular location is the secreted. Its function is as follows. Upon intracranial injection in mice, as25a (the toxin without the two 4-hydroxyprolines) provokes paralysis of the hind limbs and death with a dose of 240 pmol. The protein is Conotoxin as25a of Conus cancellatus (Cancellate cone).